Here is a 230-residue protein sequence, read N- to C-terminus: CRP-like protein Clp (230 aa).

18–139 is an a nucleoside 3',5'-cyclic phosphate binding site; the sequence is PSLALDAGTI…APKILYAIGV (122 aa). The HTH crp-type domain maps to 158 to 230; it reads LDVTDRIVRT…GKTVVLYGTR (73 aa). Positions 190-209 form a DNA-binding region, H-T-H motif; the sequence is RQELARLVGCSREMAGRVLK.

As to quaternary structure, homodimer.

The protein localises to the cytoplasm. Its activity is regulated as follows. Allosterically inhibited by cyclic di-GMP (c-di-GMP), which binds to Clp and abolishes its ability to bind its target gene promoter. Its function is as follows. Global transcriptional regulator that regulates virulence factors production by activating or repressing the expression of a large set of genes in diffusible signal factor (DSF) pathway. The polypeptide is CRP-like protein Clp (clp) (Xanthomonas oryzae pv. oryzae (strain MAFF 311018)).